Here is a 432-residue protein sequence, read N- to C-terminus: Short/branched chain specific acyl-CoA dehydrogenase, mitochondrial (432 aa).

The transit peptide at M1–S33 directs the protein to the mitochondrion. K70 is subject to N6-acetyllysine; alternate. Residue K70 is modified to N6-succinyllysine; alternate. FAD contacts are provided by residues F174–S183 and W207–S209. S183 provides a ligand contact to substrate. S183 is modified (phosphoserine). Residues Y229 and Y283 each coordinate substrate. At K284 the chain carries N6-acetyllysine; alternate. K284 is modified (N6-succinyllysine; alternate). N291–R294 is a binding site for substrate. Residues R319, Q330, and E387–G391 contribute to the FAD site. Residue E414 is the Proton acceptor of the active site. Residue A416–N418 coordinates FAD. Position 426 is an N6-acetyllysine (K426).

It belongs to the acyl-CoA dehydrogenase family. As to quaternary structure, homotetramer. It depends on FAD as a cofactor. As to expression, ubiquitously expressed.

It is found in the mitochondrion matrix. It carries out the reaction 2-methylbutanoyl-CoA + oxidized [electron-transfer flavoprotein] + H(+) = (2E)-2-methylbut-2-enoyl-CoA + reduced [electron-transfer flavoprotein]. The catalysed reaction is (2S)-2-methylbutanoyl-CoA + oxidized [electron-transfer flavoprotein] + H(+) = (2E)-2-methylbut-2-enoyl-CoA + reduced [electron-transfer flavoprotein]. It catalyses the reaction (2R)-2-methylbutanoyl-CoA + oxidized [electron-transfer flavoprotein] + H(+) = ethylacryloyl-CoA + reduced [electron-transfer flavoprotein]. The enzyme catalyses butanoyl-CoA + oxidized [electron-transfer flavoprotein] + H(+) = (2E)-butenoyl-CoA + reduced [electron-transfer flavoprotein]. It carries out the reaction 2-methylpropanoyl-CoA + oxidized [electron-transfer flavoprotein] + H(+) = 2-methylpropenoyl-CoA + reduced [electron-transfer flavoprotein]. The catalysed reaction is hexanoyl-CoA + oxidized [electron-transfer flavoprotein] + H(+) = (2E)-hexenoyl-CoA + reduced [electron-transfer flavoprotein]. It catalyses the reaction 2-methylhexanoyl-CoA + oxidized [electron-transfer flavoprotein] + H(+) = 2-methylhexenoyl-CoA + reduced [electron-transfer flavoprotein]. The enzyme catalyses valproyl-CoA + oxidized [electron-transfer flavoprotein] + H(+) = (2E)-2-propylpent-2-enoyl-CoA + reduced [electron-transfer flavoprotein]. The protein operates within lipid metabolism; mitochondrial fatty acid beta-oxidation. Its pathway is amino-acid degradation; L-isoleucine degradation. Its activity is regulated as follows. Competitively inhibited by valproyl-CoA. Functionally, short and branched chain specific acyl-CoA dehydrogenase that catalyzes the removal of one hydrogen from C-2 and C-3 of the fatty acyl-CoA thioester, resulting in the formation of trans-2-enoyl-CoA. Among the different mitochondrial acyl-CoA dehydrogenases, acts specifically on short and branched chain acyl-CoA derivatives such as (S)-2-methylbutyryl-CoA as well as short straight chain acyl-CoAs such as butyryl-CoA. Plays an important role in the metabolism of L-isoleucine by catalyzing the dehydrogenation of 2-methylbutyryl-CoA, one of the steps of the L-isoleucine catabolic pathway. Can also act on valproyl-CoA, a metabolite of valproic acid, an antiepileptic drug. In Homo sapiens (Human), this protein is Short/branched chain specific acyl-CoA dehydrogenase, mitochondrial.